Consider the following 69-residue polypeptide: Trypsin/subtilisin inhibitor (69 aa).

Cysteine 4 and cysteine 49 are oxidised to a cystine.

It belongs to the protease inhibitor I13 (potato type I serine protease inhibitor) family.

In terms of biological role, inhibitor of trypsin, chymotrypsin, subtilisin, etc. The protein is Trypsin/subtilisin inhibitor of Amaranthus caudatus (Love-lies-bleeding).